The chain runs to 602 residues: Protein indeterminate-domain 5, chloroplastic (602 aa).

Composition is skewed to low complexity over residues 1–10 and 21–30; these read MAASSSSAAS and HLLPPNSSAA. Residues 1-50 constitute a chloroplast transit peptide; it reads MAASSSSAASFFGVRQDDQSHLLPPNSSAAAPPPPPPHHQAPLPPLEAPP. Positions 1-65 are disordered; it reads MAASSSSAAS…NQPRTPNSDA (65 aa). Residues 31–48 are compositionally biased toward pro residues; the sequence is APPPPPPHHQAPLPPLEA. Phosphothreonine is present on T60. Phosphoserine is present on S71. C2H2-type zinc fingers lie at residues 81–103 and 122–152; these read FICEVCNKGFQREQNLQLHRRGH and YLCPEPSCVHHDPSRALGDLTGIKKHYYRKH. Residues 157-180 form a C2H2-type 2; degenerate zinc finger; it reads WKCDKCSKRYAVQSDWKAHSKTCG. Residues C159, C162, H175, C179, C186, C188, H201, and C205 each contribute to the Zn(2+) site. A CCHC-type 2; atypical zinc finger spans residues 184–207; sequence YRCDCGTLFSRRDSFITHRAFCDA. The interval 194–206 is SHR-binding; that stretch reads RRDSFITHRAFCD. Disordered stretches follow at residues 443–467 and 537–602; these read KAAQMGSTSSNNNNGSNTNNNNNAS and KSMS…HASF. Low complexity-rich tracts occupy residues 448 to 467, 546 to 560, and 570 to 579; these read GSTSSNNNNGSNTNNNNNAS, QQQQQQQQQQQQQQQ, and SSSDSADRSS.

As to quaternary structure, binds to RGA and SCL3 competitively. As to expression, highly expressed in leaf tissues.

Its subcellular location is the plastid. The protein localises to the chloroplast. In terms of biological role, transcription factor acting as a positive regulator of the starch synthase SS4. Controls chloroplast development and starch granule formation. Binds DNA via its zinc fingers. Recognizes and binds to SCL3 promoter sequence 5'-AGACAA-3' to promote its expression when in complex with RGA. The polypeptide is Protein indeterminate-domain 5, chloroplastic (Arabidopsis thaliana (Mouse-ear cress)).